Here is a 465-residue protein sequence, read N- to C-terminus: Ribulose bisphosphate carboxylase large chain (465 aa).

Lys-4 is modified (N6,N6,N6-trimethyllysine). The substrate site is built by Asn-113 and Thr-163. The active-site Proton acceptor is Lys-165. A substrate-binding site is contributed by Lys-167. Residues Lys-191, Asp-193, and Glu-194 each coordinate Mg(2+). Lys-191 carries the post-translational modification N6-carboxylysine. The Proton acceptor role is filled by His-284. Arg-285, His-317, and Ser-369 together coordinate substrate.

This sequence belongs to the RuBisCO large chain family. Type I subfamily. As to quaternary structure, heterohexadecamer of 8 large chains and 8 small chains; disulfide-linked. The disulfide link is formed within the large subunit homodimers. The cofactor is Mg(2+). In terms of processing, the disulfide bond which can form in the large chain dimeric partners within the hexadecamer appears to be associated with oxidative stress and protein turnover.

The protein localises to the plastid. It localises to the chloroplast. It catalyses the reaction 2 (2R)-3-phosphoglycerate + 2 H(+) = D-ribulose 1,5-bisphosphate + CO2 + H2O. It carries out the reaction D-ribulose 1,5-bisphosphate + O2 = 2-phosphoglycolate + (2R)-3-phosphoglycerate + 2 H(+). RuBisCO catalyzes two reactions: the carboxylation of D-ribulose 1,5-bisphosphate, the primary event in carbon dioxide fixation, as well as the oxidative fragmentation of the pentose substrate in the photorespiration process. Both reactions occur simultaneously and in competition at the same active site. The sequence is that of Ribulose bisphosphate carboxylase large chain from Cornus canadensis (Bunchberry dogwood).